The primary structure comprises 482 residues: Potential E3 ubiquitin-protein ligase ariadne-2 (482 aa).

Residues Ala125–Lys334 form a TRIAD supradomain region. Cys129, Cys132, Cys145, His147, Cys150, Cys153, Cys172, Cys177, Cys218, Cys223, Cys239, Cys242, Cys247, Cys250, His255, Cys260, Cys287, and Cys290 together coordinate Zn(2+). An RING-type 1 zinc finger spans residues Cys129–Cys177. An IBR-type zinc finger spans residues Leu198–Cys260. The RING-type 2; atypical zinc finger occupies Cys287–Cys316. Residue Cys300 is part of the active site. 6 residues coordinate Zn(2+): Cys305, Cys308, Cys313, Cys316, His323, and Cys330. A coiled-coil region spans residues Phe433–Arg459.

The protein belongs to the RBR family. Ariadne subfamily.

It localises to the nucleus. It catalyses the reaction [E2 ubiquitin-conjugating enzyme]-S-ubiquitinyl-L-cysteine + [acceptor protein]-L-lysine = [E2 ubiquitin-conjugating enzyme]-L-cysteine + [acceptor protein]-N(6)-ubiquitinyl-L-lysine.. Might act as an E3 ubiquitin-protein ligase, or as part of E3 complex, which accepts ubiquitin from specific E2 ubiquitin-conjugating enzymes, such as UBC-2/UBE2L3, and then transfers it to substrates. This Caenorhabditis elegans protein is Potential E3 ubiquitin-protein ligase ariadne-2.